The primary structure comprises 466 residues: Uronate isomerase (466 aa).

This sequence belongs to the metallo-dependent hydrolases superfamily. Uronate isomerase family.

The enzyme catalyses D-glucuronate = D-fructuronate. The catalysed reaction is aldehydo-D-galacturonate = keto-D-tagaturonate. Its pathway is carbohydrate metabolism; pentose and glucuronate interconversion. This Caldanaerobacter subterraneus subsp. tengcongensis (strain DSM 15242 / JCM 11007 / NBRC 100824 / MB4) (Thermoanaerobacter tengcongensis) protein is Uronate isomerase.